Consider the following 159-residue polypeptide: Ribosome-binding factor A (159 aa).

The segment at 127–159 is disordered; it reads TYAGEADPYRRPAVDDAGDSADDADPAEDERPS. A compositionally biased stretch (acidic residues) spans 142–159; it reads DAGDSADDADPAEDERPS.

This sequence belongs to the RbfA family. As to quaternary structure, monomer. Binds 30S ribosomal subunits, but not 50S ribosomal subunits or 70S ribosomes.

Its subcellular location is the cytoplasm. In terms of biological role, one of several proteins that assist in the late maturation steps of the functional core of the 30S ribosomal subunit. Associates with free 30S ribosomal subunits (but not with 30S subunits that are part of 70S ribosomes or polysomes). Required for efficient processing of 16S rRNA. May interact with the 5'-terminal helix region of 16S rRNA. This Beutenbergia cavernae (strain ATCC BAA-8 / DSM 12333 / CCUG 43141 / JCM 11478 / NBRC 16432 / NCIMB 13614 / HKI 0122) protein is Ribosome-binding factor A.